Here is a 732-residue protein sequence, read N- to C-terminus: Ribosomal RNA large subunit methyltransferase K/L (732 aa).

A THUMP domain is found at 50 to 162 (MAYRICLWSR…RGRLLLGLDL (113 aa)). The segment at 396–424 (TERETSSEGDEPQGASGATSRPGPRNDGA) is disordered.

The protein belongs to the methyltransferase superfamily. RlmKL family.

Its subcellular location is the cytoplasm. It carries out the reaction guanosine(2445) in 23S rRNA + S-adenosyl-L-methionine = N(2)-methylguanosine(2445) in 23S rRNA + S-adenosyl-L-homocysteine + H(+). The enzyme catalyses guanosine(2069) in 23S rRNA + S-adenosyl-L-methionine = N(2)-methylguanosine(2069) in 23S rRNA + S-adenosyl-L-homocysteine + H(+). In terms of biological role, specifically methylates the guanine in position 2445 (m2G2445) and the guanine in position 2069 (m7G2069) of 23S rRNA. This chain is Ribosomal RNA large subunit methyltransferase K/L, found in Chromohalobacter salexigens (strain ATCC BAA-138 / DSM 3043 / CIP 106854 / NCIMB 13768 / 1H11).